A 158-amino-acid chain; its full sequence is Large ribosomal subunit protein bL19 (158 aa).

The segment covering 119-129 (SDRSRVMKDAA) has biased composition (basic and acidic residues). Residues 119–158 (SDRSRVMKDAARAQQARDAAQGNSSSETQSSTAAVETQGE) are disordered. Over residues 130–139 (RAQQARDAAQ) the composition is skewed to low complexity. The span at 140–158 (GNSSSETQSSTAAVETQGE) shows a compositional bias: polar residues.

The protein belongs to the bacterial ribosomal protein bL19 family.

Its function is as follows. This protein is located at the 30S-50S ribosomal subunit interface and may play a role in the structure and function of the aminoacyl-tRNA binding site. This chain is Large ribosomal subunit protein bL19, found in Deinococcus geothermalis (strain DSM 11300 / CIP 105573 / AG-3a).